The chain runs to 282 residues: Ribosome-inactivating protein bryodin II (282 aa).

The signal sequence occupies residues 1–21 (MRSIGFYSVLALYVGAHVTED). Asn25 carries an N-linked (GlcNAc...) asparagine glycan. Residue Glu183 is part of the active site.

The protein belongs to the ribosome-inactivating protein family. Type 1 RIP subfamily.

It carries out the reaction Endohydrolysis of the N-glycosidic bond at one specific adenosine on the 28S rRNA.. In terms of biological role, ribosome-inactivating protein of type 1, inhibits protein synthesis in animal cells. The polypeptide is Ribosome-inactivating protein bryodin II (Bryonia dioica (Red bryony)).